The chain runs to 184 residues: Alpha-tubulin N-acetyltransferase (184 aa).

Residues 1 to 174 form the N-acetyltransferase domain; it reads MDTHGEKMKN…NNFVIFAEYF (174 aa). Acetyl-CoA is bound by residues 108-121 and 144-153; these read FYIRRDFRKRGLGL and SHKLRSFLKK.

This sequence belongs to the acetyltransferase ATAT1 family.

The catalysed reaction is L-lysyl-[alpha-tubulin] + acetyl-CoA = N(6)-acetyl-L-lysyl-[alpha-tubulin] + CoA + H(+). Its function is as follows. Specifically acetylates 'Lys-40' in alpha-tubulin on the lumenal side of microtubules. Promotes microtubule destabilization and accelerates microtubule dynamics; this activity may be independent of acetylation activity. Acetylates alpha-tubulin with a slow enzymatic rate, due to a catalytic site that is not optimized for acetyl transfer. Enters the microtubule through each end and diffuses quickly throughout the lumen of microtubules. Acetylates only long/old microtubules because of its slow acetylation rate since it does not have time to act on dynamically unstable microtubules before the enzyme is released. This Plasmodium vivax (strain Salvador I) protein is Alpha-tubulin N-acetyltransferase.